A 729-amino-acid polypeptide reads, in one-letter code: Phosphoribosylformylglycinamidine synthase subunit PurL (729 aa).

Histidine 54 is an active-site residue. ATP is bound by residues tyrosine 57 and lysine 96. Glutamate 98 is a binding site for Mg(2+). Residues serine 99 to histidine 102 and arginine 121 contribute to the substrate site. Histidine 100 (proton acceptor) is an active-site residue. Mg(2+) is bound at residue aspartate 122. Position 245 (glutamine 245) interacts with substrate. Position 273 (aspartate 273) interacts with Mg(2+). Glutamate 317–glutamine 319 provides a ligand contact to substrate. ATP-binding residues include aspartate 495 and glycine 532. Asparagine 533 is a Mg(2+) binding site. A substrate-binding site is contributed by serine 535.

This sequence belongs to the FGAMS family. As to quaternary structure, monomer. Part of the FGAM synthase complex composed of 1 PurL, 1 PurQ and 2 PurS subunits.

It localises to the cytoplasm. It catalyses the reaction N(2)-formyl-N(1)-(5-phospho-beta-D-ribosyl)glycinamide + L-glutamine + ATP + H2O = 2-formamido-N(1)-(5-O-phospho-beta-D-ribosyl)acetamidine + L-glutamate + ADP + phosphate + H(+). The protein operates within purine metabolism; IMP biosynthesis via de novo pathway; 5-amino-1-(5-phospho-D-ribosyl)imidazole from N(2)-formyl-N(1)-(5-phospho-D-ribosyl)glycinamide: step 1/2. Functionally, part of the phosphoribosylformylglycinamidine synthase complex involved in the purines biosynthetic pathway. Catalyzes the ATP-dependent conversion of formylglycinamide ribonucleotide (FGAR) and glutamine to yield formylglycinamidine ribonucleotide (FGAM) and glutamate. The FGAM synthase complex is composed of three subunits. PurQ produces an ammonia molecule by converting glutamine to glutamate. PurL transfers the ammonia molecule to FGAR to form FGAM in an ATP-dependent manner. PurS interacts with PurQ and PurL and is thought to assist in the transfer of the ammonia molecule from PurQ to PurL. The polypeptide is Phosphoribosylformylglycinamidine synthase subunit PurL (Staphylococcus epidermidis (strain ATCC 35984 / DSM 28319 / BCRC 17069 / CCUG 31568 / BM 3577 / RP62A)).